The chain runs to 316 residues: Replication initiation protein (316 aa).

Belongs to the initiator RepB protein family.

In Escherichia coli, this protein is Replication initiation protein (repA).